A 450-amino-acid polypeptide reads, in one-letter code: Tubulin beta-1 chain (450 aa).

GTP contacts are provided by Gln-11, Glu-69, Ser-138, Gly-142, Thr-143, Gly-144, Asn-204, and Asn-226. Mg(2+) is bound at residue Glu-69. The tract at residues 426 to 450 (QDATADEDEYGEEEGDEEEYGQHDI) is disordered. Over residues 429–444 (TADEDEYGEEEGDEEE) the composition is skewed to acidic residues.

This sequence belongs to the tubulin family. In terms of assembly, dimer of alpha and beta chains. A typical microtubule is a hollow water-filled tube with an outer diameter of 25 nm and an inner diameter of 15 nM. Alpha-beta heterodimers associate head-to-tail to form protofilaments running lengthwise along the microtubule wall with the beta-tubulin subunit facing the microtubule plus end conferring a structural polarity. Microtubules usually have 13 protofilaments but different protofilament numbers can be found in some organisms and specialized cells. The cofactor is Mg(2+).

It is found in the cytoplasm. The protein localises to the cytoskeleton. Its function is as follows. Tubulin is the major constituent of microtubules, a cylinder consisting of laterally associated linear protofilaments composed of alpha- and beta-tubulin heterodimers. Microtubules grow by the addition of GTP-tubulin dimers to the microtubule end, where a stabilizing cap forms. Below the cap, tubulin dimers are in GDP-bound state, owing to GTPase activity of alpha-tubulin. This is Tubulin beta-1 chain (TUBB1) from Pisum sativum (Garden pea).